The sequence spans 455 residues: Exodeoxyribonuclease 7 large subunit (455 aa).

Belongs to the XseA family. In terms of assembly, heterooligomer composed of large and small subunits.

Its subcellular location is the cytoplasm. It carries out the reaction Exonucleolytic cleavage in either 5'- to 3'- or 3'- to 5'-direction to yield nucleoside 5'-phosphates.. Its function is as follows. Bidirectionally degrades single-stranded DNA into large acid-insoluble oligonucleotides, which are then degraded further into small acid-soluble oligonucleotides. The chain is Exodeoxyribonuclease 7 large subunit from Koribacter versatilis (strain Ellin345).